The primary structure comprises 465 residues: Ribulose bisphosphate carboxylase large chain (465 aa).

Residue lysine 4 is modified to N6,N6,N6-trimethyllysine. Substrate-binding residues include asparagine 113 and threonine 163. Catalysis depends on lysine 165, which acts as the Proton acceptor. Position 167 (lysine 167) interacts with substrate. The Mg(2+) site is built by lysine 191, aspartate 193, and glutamate 194. Lysine 191 is modified (N6-carboxylysine). Residue histidine 284 is the Proton acceptor of the active site. 3 residues coordinate substrate: arginine 285, histidine 317, and serine 369.

The protein belongs to the RuBisCO large chain family. Type I subfamily. As to quaternary structure, heterohexadecamer of 8 large chains and 8 small chains; disulfide-linked. The disulfide link is formed within the large subunit homodimers. Mg(2+) is required as a cofactor. In terms of processing, the disulfide bond which can form in the large chain dimeric partners within the hexadecamer appears to be associated with oxidative stress and protein turnover.

The protein localises to the plastid. Its subcellular location is the chloroplast. It carries out the reaction 2 (2R)-3-phosphoglycerate + 2 H(+) = D-ribulose 1,5-bisphosphate + CO2 + H2O. It catalyses the reaction D-ribulose 1,5-bisphosphate + O2 = 2-phosphoglycolate + (2R)-3-phosphoglycerate + 2 H(+). RuBisCO catalyzes two reactions: the carboxylation of D-ribulose 1,5-bisphosphate, the primary event in carbon dioxide fixation, as well as the oxidative fragmentation of the pentose substrate in the photorespiration process. Both reactions occur simultaneously and in competition at the same active site. The sequence is that of Ribulose bisphosphate carboxylase large chain from Cornus canadensis (Bunchberry dogwood).